The sequence spans 400 residues: Nicotinate phosphoribosyltransferase (400 aa).

Phosphohistidine; by autocatalysis is present on histidine 220.

Belongs to the NAPRTase family. Transiently phosphorylated on a His residue during the reaction cycle. Phosphorylation strongly increases the affinity for substrates and increases the rate of nicotinate D-ribonucleotide production. Dephosphorylation regenerates the low-affinity form of the enzyme, leading to product release.

It carries out the reaction nicotinate + 5-phospho-alpha-D-ribose 1-diphosphate + ATP + H2O = nicotinate beta-D-ribonucleotide + ADP + phosphate + diphosphate. It functions in the pathway cofactor biosynthesis; NAD(+) biosynthesis; nicotinate D-ribonucleotide from nicotinate: step 1/1. Functionally, catalyzes the synthesis of beta-nicotinate D-ribonucleotide from nicotinate and 5-phospho-D-ribose 1-phosphate at the expense of ATP. The sequence is that of Nicotinate phosphoribosyltransferase from Escherichia fergusonii (strain ATCC 35469 / DSM 13698 / CCUG 18766 / IAM 14443 / JCM 21226 / LMG 7866 / NBRC 102419 / NCTC 12128 / CDC 0568-73).